Consider the following 207-residue polypeptide: Glycerol-3-phosphate acyltransferase (207 aa).

6 consecutive transmembrane segments (helical) span residues 1–21 (MIII…GKYF), 42–62 (ILGV…GTLA), 65–85 (IPII…FAII), 105–125 (AGVL…IFLL), 138–158 (ITVA…GFIL), and 159–179 (TDYD…IIIR).

The protein belongs to the PlsY family. In terms of assembly, probably interacts with PlsX.

The protein resides in the cell membrane. The catalysed reaction is an acyl phosphate + sn-glycerol 3-phosphate = a 1-acyl-sn-glycero-3-phosphate + phosphate. Its pathway is lipid metabolism; phospholipid metabolism. Catalyzes the transfer of an acyl group from acyl-phosphate (acyl-PO(4)) to glycerol-3-phosphate (G3P) to form lysophosphatidic acid (LPA). This enzyme utilizes acyl-phosphate as fatty acyl donor, but not acyl-CoA or acyl-ACP. The sequence is that of Glycerol-3-phosphate acyltransferase from Streptococcus agalactiae serotype Ia (strain ATCC 27591 / A909 / CDC SS700).